The chain runs to 334 residues: Formamidase (334 aa).

A CN hydrolase domain is found at 14–260 (FLVAAIQFPV…WEIVTGEIYP (247 aa)). Glu-60 (proton acceptor) is an active-site residue. Lys-133 functions as the Proton donor in the catalytic mechanism. Cys-166 acts as the Nucleophile in catalysis.

The protein belongs to the carbon-nitrogen hydrolase superfamily. Aliphatic amidase family.

The catalysed reaction is formamide + H2O = formate + NH4(+). In terms of biological role, is an aliphatic amidase with a restricted substrate specificity, as it only hydrolyzes formamide. This Helicobacter pylori (strain HPAG1) protein is Formamidase.